The chain runs to 121 residues: ATP synthase epsilon chain (121 aa).

It belongs to the ATPase epsilon chain family. F-type ATPases have 2 components, CF(1) - the catalytic core - and CF(0) - the membrane proton channel. CF(1) has five subunits: alpha(3), beta(3), gamma(1), delta(1), epsilon(1). CF(0) has three main subunits: a, b and c.

The protein localises to the cell membrane. Its function is as follows. Produces ATP from ADP in the presence of a proton gradient across the membrane. The sequence is that of ATP synthase epsilon chain from Mycobacterium leprae (strain Br4923).